A 212-amino-acid chain; its full sequence is Protein G1-like7 (212 aa).

A compositionally biased stretch (low complexity) spans 1–22 (MDPSGPGPSSAAAGGAPAVAAA). Disordered regions lie at residues 1-34 (MDPSGPGPSSAAAGGAPAVAAAPQPPAQLSRYES) and 148-212 (KARG…PSAS). One can recognise an ALOG domain in the interval 31-158 (RYESQKRRDW…ARGIPYEKKK (128 aa)). The short motif at 156-160 (KKKRK) is the Nuclear localization signal element. Positions 167–182 (PAGVEPSGSSSAAAAA) are enriched in low complexity. A compositionally biased stretch (gly residues) spans 183-194 (AGGGDAGSGGGA). The segment covering 195 to 212 (AATTTAQPGGSGTAPSAS) has biased composition (low complexity).

This sequence belongs to the plant homeotic and developmental regulators ALOG protein family.

The protein localises to the nucleus. Functionally, probable transcription regulator that acts as a developmental regulator by promoting cell growth in response to light. This is Protein G1-like7 (G1L7) from Oryza sativa subsp. japonica (Rice).